A 122-amino-acid polypeptide reads, in one-letter code: Large ribosomal subunit protein bL12 (122 aa).

Belongs to the bacterial ribosomal protein bL12 family. As to quaternary structure, homodimer. Part of the ribosomal stalk of the 50S ribosomal subunit. Forms a multimeric L10(L12)X complex, where L10 forms an elongated spine to which 2 to 4 L12 dimers bind in a sequential fashion. Binds GTP-bound translation factors.

In terms of biological role, forms part of the ribosomal stalk which helps the ribosome interact with GTP-bound translation factors. Is thus essential for accurate translation. This chain is Large ribosomal subunit protein bL12, found in Lacticaseibacillus casei (strain BL23) (Lactobacillus casei).